The sequence spans 824 residues: MTVLQEPVQAAIWQALNHYAYRDAVFLAERLYAEVHSEEALFLLATCYYRSGKAYKAYRLLKGHSCTTPQCKYLLAKCCVDLSKLAEGEQILSGGVFNKQKSHDDIVTEFGDSACFTLSLLGHVYCKTDRLAKGSECYQKSLSLNPFLWSPFESLCEIGEKPDPDQTFKFTSLQNFSNCLPNSCTTQVPNHSLSHRQPETVLTETPQDTIELNRLNLESSNSKYSLNTDSSVSYIDSAVISPDTVPLGTGTSILSKQVQNKPKTGRSLLGGPAALSPLTPSFGILPLETPSPGDGSYLQNYTNTPPVIDVPSTGAPSKKSVARIGQTGTKSVFSQSGNSREVTPILAQTQSSGPQTSTTPQVLSPTITSPPNALPRRSSRLFTSDSSTTKENSKKLKMKFPPKIPNRKTKSKTNKGGITQPNINDSLEITKLDSSIISEGKISTITPQIQAFNLQKAAAEGLMSLLREMGKGYLALCSYNCKEAINILSHLPSHHYNTGWVLCQIGRAYFELSEYMQAERIFSEVRRIENYRVEGMEIYSTTLWHLQKDVALSVLSKDLTDMDKNSPEAWCAAGNCFSLQREHDIAIKFFQRAIQVDPNYAYAYTLLGHEFVLTEELDKALACFRNAIRVNPRHYNAWYGLGMIYYKQEKFSLAEMHFQKALDINPQSSVLLCHIGVVQHALKKSEKALDTLNKAIVIDPKNPLCKFHRASVLFANEKYKSALQELEELKQIVPKESLVYFLIGKVYKKLGQTHLALMNFSWAMDLDPKGANNQIKEAIDKRYLPDDEEPITQEEQIMGTDESQESSMTDADDTQLHAAESDEF.

TPR repeat units lie at residues 6–35 (EPVQAAIWQALNHYAYRDAVFLAERLYAEV), 38–65 (EEALFLLATCYYRSGKAYKAYRLLKGHS), 67–99 (TTPQCKYLLAKCCVDLSKLAEGEQILSGGVFNK), and 115–145 (CFTLSLLGHVYCKTDRLAKGSECYQKSLSLN). Threonine 205, threonine 209, and threonine 244 each carry phosphothreonine. The disordered stretch occupies residues 287 to 422 (LETPSPGDGS…TNKGGITQPN (136 aa)). Phosphoserine is present on serine 291. Threonine 313 carries the phosphothreonine modification. Positions 326 to 341 (QTGTKSVFSQSGNSRE) are enriched in polar residues. At serine 339 the chain carries Phosphoserine. Over residues 348–361 (QTQSSGPQTSTTPQ) the composition is skewed to low complexity. Over residues 362–371 (VLSPTITSPP) the composition is skewed to polar residues. The residue at position 366 (threonine 366) is a Phosphothreonine. Residues serine 379 and serine 386 each carry the phosphoserine modification. Residues 380–390 (RLFTSDSSTTK) show a composition bias toward polar residues. Positions 395-413 (KLKMKFPPKIPNRKTKSKT) are enriched in basic residues. Serine 426 carries the phosphoserine modification. At threonine 430 the chain carries Phosphothreonine. A phosphoserine mark is found at serine 435 and serine 438. A Phosphothreonine modification is found at threonine 446. 9 TPR repeats span residues 465–495 (LLREMGKGYLALCSYNCKEAINILSHLPSHH), 499–528 (GWVLCQIGRAYFELSEYMQAERIFSEVRRI), 533–563 (VEGMEIYSTTLWHLQKDVALSVLSKDLTDMD), 567–598 (PEAWCAAGNCFSLQREHDIAIKFFQRAIQVDP), 601–631 (AYAYTLLGHEFVLTEELDKALACFRNAIRVN), 635–667 (YNAWYGLGMIYYKQEKFSLAEMHFQKALDINPQ), 670–702 (VLLCHIGVVQHALKKSEKALDTLNKAIVIDPKN), 704–734 (LCKFHRASVLFANEKYKSALQELEELKQIVP), and 737–768 (SLVYFLIGKVYKKLGQTHLALMNFSWAMDLDP). A disordered region spans residues 781 to 824 (KRYLPDDEEPITQEEQIMGTDESQESSMTDADDTQLHAAESDEF). Serine 821 is subject to Phosphoserine.

It belongs to the APC3/CDC27 family. Homodimer. The mammalian APC/C is composed at least of 14 distinct subunits ANAPC1, ANAPC2, CDC27/APC3, ANAPC4, ANAPC5, CDC16/APC6, ANAPC7, CDC23/APC8, ANAPC10, ANAPC11, CDC26/APC12, ANAPC13, ANAPC15 and ANAPC16 that assemble into a complex of at least 19 chains with a combined molecular mass of around 1.2 MDa; APC/C interacts with FZR1 and FBXO5. Interacts with RB. Interacts with FAM168B/MANI. Interacts with MCPH1. In terms of processing, phosphorylated. Phosphorylation on Ser-426 and Thr-446 occurs specifically during mitosis.

Its subcellular location is the nucleus. The protein resides in the cytoplasm. The protein localises to the cytoskeleton. It is found in the spindle. It participates in protein modification; protein ubiquitination. In terms of biological role, component of the anaphase promoting complex/cyclosome (APC/C), a cell cycle-regulated E3 ubiquitin ligase that controls progression through mitosis and the G1 phase of the cell cycle. The APC/C complex acts by mediating ubiquitination and subsequent degradation of target proteins: it mainly mediates the formation of 'Lys-11'-linked polyubiquitin chains and, to a lower extent, the formation of 'Lys-48'- and 'Lys-63'-linked polyubiquitin chains. The APC/C complex catalyzes assembly of branched 'Lys-11'-/'Lys-48'-linked branched ubiquitin chains on target proteins. This is Cell division cycle protein 27 homolog (CDC27) from Homo sapiens (Human).